Reading from the N-terminus, the 345-residue chain is Glycerol-3-phosphate dehydrogenase [NAD(P)+] (345 aa).

The NADPH site is built by Ser-23, Tyr-24, His-44, and Lys-118. Sn-glycerol 3-phosphate contacts are provided by Lys-118, Gly-147, and Thr-149. An NADPH-binding site is contributed by Ala-151. Residues Lys-203, Asp-256, Ser-266, Arg-267, and Asn-268 each contribute to the sn-glycerol 3-phosphate site. Lys-203 acts as the Proton acceptor in catalysis. An NADPH-binding site is contributed by Arg-267. NADPH is bound by residues Val-291 and Glu-293.

It belongs to the NAD-dependent glycerol-3-phosphate dehydrogenase family.

The protein localises to the cytoplasm. It carries out the reaction sn-glycerol 3-phosphate + NAD(+) = dihydroxyacetone phosphate + NADH + H(+). It catalyses the reaction sn-glycerol 3-phosphate + NADP(+) = dihydroxyacetone phosphate + NADPH + H(+). The protein operates within membrane lipid metabolism; glycerophospholipid metabolism. Functionally, catalyzes the reduction of the glycolytic intermediate dihydroxyacetone phosphate (DHAP) to sn-glycerol 3-phosphate (G3P), the key precursor for phospholipid synthesis. The sequence is that of Glycerol-3-phosphate dehydrogenase [NAD(P)+] from Vibrio vulnificus (strain CMCP6).